The chain runs to 356 residues: Chorismate synthase (356 aa).

Arg-46 serves as a coordination point for NADP(+). Residues 122-124 (RSS), 234-235 (NG), Gly-274, 289-293 (KPTPS), and Arg-315 contribute to the FMN site.

This sequence belongs to the chorismate synthase family. As to quaternary structure, homotetramer. FMNH2 serves as cofactor.

The catalysed reaction is 5-O-(1-carboxyvinyl)-3-phosphoshikimate = chorismate + phosphate. Its pathway is metabolic intermediate biosynthesis; chorismate biosynthesis; chorismate from D-erythrose 4-phosphate and phosphoenolpyruvate: step 7/7. In terms of biological role, catalyzes the anti-1,4-elimination of the C-3 phosphate and the C-6 proR hydrogen from 5-enolpyruvylshikimate-3-phosphate (EPSP) to yield chorismate, which is the branch point compound that serves as the starting substrate for the three terminal pathways of aromatic amino acid biosynthesis. This reaction introduces a second double bond into the aromatic ring system. The protein is Chorismate synthase of Campylobacter fetus subsp. fetus (strain 82-40).